The primary structure comprises 115 residues: Mediator of RNA polymerase II transcription subunit 22 (115 aa).

It belongs to the Mediator complex subunit 22 family. Component of the Mediator complex.

Its subcellular location is the nucleus. Functionally, component of the Mediator complex, a coactivator involved in the regulated transcription of nearly all RNA polymerase II-dependent genes. Mediator functions as a bridge to convey information from gene-specific regulatory proteins to the basal RNA polymerase II transcription machinery. Mediator is recruited to promoters by direct interactions with regulatory proteins and serves as a scaffold for the assembly of a functional preinitiation complex with RNA polymerase II and the general transcription factors. The protein is Mediator of RNA polymerase II transcription subunit 22 (SRB6) of Candida albicans (strain SC5314 / ATCC MYA-2876) (Yeast).